A 409-amino-acid chain; its full sequence is Phosphoserine phosphatase SerB2 (409 aa).

ACT domains are found at residues 8–86 (LITV…RSDD) and 102–174 (GRPI…DYGL). The active-site Nucleophile is the Asp185. Mg(2+) is bound by residues Asp185 and Asp187. Asp187 (proton donor) is an active-site residue. Substrate is bound by residues Glu194, Arg230, 273 to 274 (SG), and Lys318. Asp341 serves as a coordination point for Mg(2+). Asn344 provides a ligand contact to substrate.

It belongs to the HAD-like hydrolase superfamily. SerB family. In terms of assembly, homodimer. The dimeric population shifts to a tetramer in the presence of L-serine, which inactivates the enzyme. Requires Mg(2+) as cofactor. It depends on Mn(2+) as a cofactor.

The protein localises to the secreted. Its subcellular location is the host cytoplasm. The protein resides in the host cytosol. It carries out the reaction O-phospho-L-serine + H2O = L-serine + phosphate. The enzyme catalyses O-phospho-D-serine + H2O = D-serine + phosphate. The catalysed reaction is O-phospho-L-seryl-[protein] + H2O = L-seryl-[protein] + phosphate. It catalyses the reaction O-phospho-L-threonyl-[protein] + H2O = L-threonyl-[protein] + phosphate. The protein operates within amino-acid biosynthesis; L-serine biosynthesis; L-serine from 3-phospho-D-glycerate: step 3/3. With respect to regulation, clofazimine, a drug being evaluated for XDR and MDR tuberculosis, inhibits SerB2 phosphatase activity and reverses the various functional effects described above and interactions with host proteins. Is inhibited by known PSP inhibitors such as chlorpromazine, DL-AP3 and sodium orthovanadate, but not by okadaic acid. By binding to the ACT domains, amino-acids have various effects on enzyme activity: L-serine and L-glycine act as inhibitors, whereas L-lysine, L-tyrosine and L-phenylalanine are activators. High throughput screen has been performed to identify specific PSP inhibitors with activity against intracellular bacteria; the two best hits identified in this screen, clorobiocin and rosaniline, are bactericidal and kill bacteria in infected macrophages in a dose-dependent manner. In terms of biological role, catalyzes the dephosphorylation of O-phospho-L-serine into L-serine, a step in the L-serine biosynthetic pathway. Exhibits high specificity for L-phosphoserine compared to substrates like L-phosphothreonine (5% relative activity) and L-phosphotyrosine (1.7% relative activity). Its function is as follows. In the host, induces significant cytoskeleton rearrangements through cofilin dephosphorylation and its subsequent activation, and affects the expression of genes that regulate actin dynamics. It specifically interacts with HSP90, HSP70 and HSP27 that block apoptotic pathways but not with other HSPs. Also interacts with GAPDH. It actively dephosphorylates MAP kinase p38 and NF-kappa B p65 (specifically at Ser-536) that play crucial roles in inflammatory and immune responses. This in turn leads to down-regulation of Interleukin 8, a chemotactic and inflammatory cytokine. Thus might help the pathogen to evade the host's immune response. Exogenous addition of purified SerB2 protein to human THP-1 cells (that can be differentiated into macrophage-like cells) induces microtubule rearrangements; the phosphatase activity is co-related to the elicited rearrangements, while addition of the ACT-domains alone elicits no rearrangements. This is Phosphoserine phosphatase SerB2 from Mycobacterium tuberculosis (strain ATCC 25618 / H37Rv).